Consider the following 146-residue polypeptide: Prolactin-inducible protein (146 aa).

The first 28 residues, 1 to 28 (MRLLQLLFRASPATLLLVLCLQLGANKA), serve as a signal peptide directing secretion. Gln-29 carries the post-translational modification Pyrrolidone carboxylic acid. Disulfide bonds link Cys-65–Cys-91 and Cys-89–Cys-123. N-linked (GlcNAc...) asparagine glycosylation occurs at Asn-105.

It belongs to the PIP family. As to quaternary structure, monomer. Interacts with AZGP1. As to expression, expressed in pathological conditions of the mammary gland and in several exocrine tissues, such as the lacrimal, salivary, and sweat glands.

It localises to the secreted. The polypeptide is Prolactin-inducible protein (PIP) (Homo sapiens (Human)).